Reading from the N-terminus, the 604-residue chain is Glutamine--fructose-6-phosphate aminotransferase [isomerizing] (604 aa).

Cys2 acts as the Nucleophile; for GATase activity in catalysis. The Glutamine amidotransferase type-2 domain occupies 2-219 (CGIMGAVSER…EGDSACVTTQ (218 aa)). 2 consecutive SIS domains span residues 279–427 (LRAS…DNRA) and 454–594 (LASL…VDQP). The active-site For Fru-6P isomerization activity is Lys599.

In terms of assembly, homodimer.

Its subcellular location is the cytoplasm. It carries out the reaction D-fructose 6-phosphate + L-glutamine = D-glucosamine 6-phosphate + L-glutamate. In terms of biological role, catalyzes the first step in hexosamine metabolism, converting fructose-6P into glucosamine-6P using glutamine as a nitrogen source. This chain is Glutamine--fructose-6-phosphate aminotransferase [isomerizing], found in Legionella pneumophila (strain Paris).